Here is a 544-residue protein sequence, read N- to C-terminus: Chaperonin GroEL (544 aa).

Residues 30–33 (TLGP), lysine 51, 87–91 (DGTTT), glycine 415, 478–480 (DVA), and aspartate 494 each bind ATP. Residues 524–544 (PEKEKKPATPAGAGGMGDMEY) form a disordered region. The span at 535 to 544 (GAGGMGDMEY) shows a compositional bias: gly residues.

It belongs to the chaperonin (HSP60) family. Forms a cylinder of 14 subunits composed of two heptameric rings stacked back-to-back. Interacts with the co-chaperonin GroES.

It localises to the cytoplasm. The enzyme catalyses ATP + H2O + a folded polypeptide = ADP + phosphate + an unfolded polypeptide.. Together with its co-chaperonin GroES, plays an essential role in assisting protein folding. The GroEL-GroES system forms a nano-cage that allows encapsulation of the non-native substrate proteins and provides a physical environment optimized to promote and accelerate protein folding. In Methylacidiphilum infernorum (isolate V4) (Methylokorus infernorum (strain V4)), this protein is Chaperonin GroEL.